The sequence spans 210 residues: 2-dehydro-3-deoxy-phosphogluconate aldolase (210 aa).

The active-site Proton acceptor is glutamate 41. Pyruvate is bound by residues arginine 45, threonine 69, and lysine 129. Catalysis depends on lysine 129, which acts as the Schiff-base intermediate with substrate.

This sequence belongs to the KHG/KDPG aldolase family. Homotrimer.

The protein localises to the cytoplasm. The enzyme catalyses 2-dehydro-3-deoxy-6-phospho-D-gluconate = D-glyceraldehyde 3-phosphate + pyruvate. It participates in carbohydrate acid metabolism; 2-dehydro-3-deoxy-D-gluconate degradation; D-glyceraldehyde 3-phosphate and pyruvate from 2-dehydro-3-deoxy-D-gluconate: step 2/2. In terms of biological role, catalyzes the reversible, stereospecific retro-aldol cleavage of 2-keto-3-deoxy-6-phosphogluconate (KDPG) to pyruvate and D-glyceraldehyde-3-phosphate. The protein is 2-dehydro-3-deoxy-phosphogluconate aldolase (eda) of Treponema pallidum (strain Nichols).